A 171-amino-acid polypeptide reads, in one-letter code: Large ribosomal subunit protein uL10 (171 aa).

This sequence belongs to the universal ribosomal protein uL10 family. As to quaternary structure, part of the ribosomal stalk of the 50S ribosomal subunit. The N-terminus interacts with L11 and the large rRNA to form the base of the stalk. The C-terminus forms an elongated spine to which L12 dimers bind in a sequential fashion forming a multimeric L10(L12)X complex.

Its function is as follows. Forms part of the ribosomal stalk, playing a central role in the interaction of the ribosome with GTP-bound translation factors. This is Large ribosomal subunit protein uL10 from Corynebacterium jeikeium (strain K411).